Consider the following 413-residue polypeptide: Patatin-like protein 3 (413 aa).

Residues 54–245 (LSVDGGARPE…ALGNPTAAAI (192 aa)) enclose the PNPLA domain. The short motif at 58-61 (GGAR) is the GGXR element. S100 functions as the Nucleophile in the catalytic mechanism. The segment at 384–413 (EHGRRKQHVPPAASGGGGGGLDCHVSKKQP) is disordered.

This sequence belongs to the patatin family.

In terms of biological role, possesses non-specific lipolytic acyl hydrolase (LAH) activity. Hydrolyzes phospholipids as well as galactolipids. May play a role in disease resistance. The chain is Patatin-like protein 3 (PLP3) from Oryza sativa subsp. indica (Rice).